The chain runs to 429 residues: Adenylosuccinate synthetase (429 aa).

GTP contacts are provided by residues 13–19 (GDEGKGK) and 41–43 (GHT). D14 (proton acceptor) is an active-site residue. Positions 14 and 41 each coordinate Mg(2+). Residues 14 to 17 (DEGK), 39 to 42 (NAGH), T130, R144, Q225, T240, and R304 contribute to the IMP site. H42 functions as the Proton donor in the catalytic mechanism. A substrate-binding site is contributed by 300-306 (ATTGRAR). Residues R306, 332–334 (KLD), and 413–415 (STG) contribute to the GTP site.

This sequence belongs to the adenylosuccinate synthetase family. Homodimer. Mg(2+) serves as cofactor.

Its subcellular location is the cytoplasm. The catalysed reaction is IMP + L-aspartate + GTP = N(6)-(1,2-dicarboxyethyl)-AMP + GDP + phosphate + 2 H(+). Its pathway is purine metabolism; AMP biosynthesis via de novo pathway; AMP from IMP: step 1/2. In terms of biological role, plays an important role in the de novo pathway of purine nucleotide biosynthesis. Catalyzes the first committed step in the biosynthesis of AMP from IMP. This chain is Adenylosuccinate synthetase, found in Pseudomonas fluorescens (strain Pf0-1).